Reading from the N-terminus, the 487-residue chain is (S)-N-methylcoclaurine 3'-hydroxylase isozyme 1 (487 aa).

A helical membrane pass occupies residues 4 to 24 (TVALIAVIISSILYLLFGGSG). Cys-429 lines the heme pocket.

Belongs to the cytochrome P450 family. Heme is required as a cofactor.

Its subcellular location is the endoplasmic reticulum membrane. It localises to the microsome membrane. The catalysed reaction is (S)-N-methylcoclaurine + reduced [NADPH--hemoprotein reductase] + O2 = (S)-3'-hydroxy-N-methylcoclaurine + oxidized [NADPH--hemoprotein reductase] + H2O + H(+). The protein operates within alkaloid biosynthesis; (S)-reticuline biosynthesis; (S)-reticuline from (S)-norcoclaurine: step 3/4. 3'-hydroxylation of (S)-N-methylcoclaurine. In Eschscholzia californica (California poppy), this protein is (S)-N-methylcoclaurine 3'-hydroxylase isozyme 1 (CYP80B1).